A 246-amino-acid polypeptide reads, in one-letter code: MAAVDIRDNLLGISWVDSSWIPILNSGSVLDYFSERSNPFYDRTCNNEVVKMQRLTLEHLNQMVGVEYILLHAQEPILFIIRKQQRQSPTQVIPLADYYIIAGVIYQAPDLGSVINSRVLTAVHGIQSAFDEAMSYCRYHPSKGYWWHFKDHEEQDKVKPKVKRKEEPSSIFQRQRVDALLLDLRQKFPPKFVQQKSGEKPVPVDQTKKEAEPLPETVKSEEKETAKNVQQTVGTKGPPEKRMRLQ.

The interval 191 to 246 (KFVQQKSGEKPVPVDQTKKEAEPLPETVKSEEKETAKNVQQTVGTKGPPEKRMRLQ) is disordered. Positions 206–226 (QTKKEAEPLPETVKSEEKETA) are enriched in basic and acidic residues. Lys-208 is covalently cross-linked (Glycyl lysine isopeptide (Lys-Gly) (interchain with G-Cter in SUMO2)). 2 positions are modified to N6-acetyllysine: Lys-236 and Lys-241.

It belongs to the Mediator complex subunit 6 family. As to quaternary structure, component of the Mediator complex, which is composed of MED1, MED4, MED6, MED7, MED8, MED9, MED10, MED11, MED12, MED13, MED13L, MED14, MED15, MED16, MED17, MED18, MED19, MED20, MED21, MED22, MED23, MED24, MED25, MED26, MED27, MED29, MED30, MED31, CCNC, CDK8 and CDC2L6/CDK11. The MED12, MED13, CCNC and CDK8 subunits form a distinct module termed the CDK8 module. Mediator containing the CDK8 module is less active than Mediator lacking this module in supporting transcriptional activation. Individual preparations of the Mediator complex lacking one or more distinct subunits have been variously termed ARC, CRSP, DRIP, PC2, SMCC and TRAP. Interacts with CTNNB1 and GLI3.

It is found in the nucleus. Component of the Mediator complex, a coactivator involved in the regulated transcription of nearly all RNA polymerase II-dependent genes. Mediator functions as a bridge to convey information from gene-specific regulatory proteins to the basal RNA polymerase II transcription machinery. Mediator is recruited to promoters by direct interactions with regulatory proteins and serves as a scaffold for the assembly of a functional preinitiation complex with RNA polymerase II and the general transcription factors. In Bos taurus (Bovine), this protein is Mediator of RNA polymerase II transcription subunit 6 (MED6).